The following is a 341-amino-acid chain: Biotin synthase (341 aa).

One can recognise a Radical SAM core domain in the interval 40 to 264; that stretch reads NSVKLNYLVN…VAPRSELRIA (225 aa). Positions 55, 59, and 62 each coordinate [4Fe-4S] cluster. The [2Fe-2S] cluster site is built by Cys-99, Cys-132, Cys-192, and Arg-262. The tract at residues 317–341 is disordered; it reads ASAPQGGVEPVLRKRGAGTELQPNA.

It belongs to the radical SAM superfamily. Biotin synthase family. As to quaternary structure, homodimer. [4Fe-4S] cluster is required as a cofactor. Requires [2Fe-2S] cluster as cofactor.

It catalyses the reaction (4R,5S)-dethiobiotin + (sulfur carrier)-SH + 2 reduced [2Fe-2S]-[ferredoxin] + 2 S-adenosyl-L-methionine = (sulfur carrier)-H + biotin + 2 5'-deoxyadenosine + 2 L-methionine + 2 oxidized [2Fe-2S]-[ferredoxin]. It participates in cofactor biosynthesis; biotin biosynthesis; biotin from 7,8-diaminononanoate: step 2/2. Its function is as follows. Catalyzes the conversion of dethiobiotin (DTB) to biotin by the insertion of a sulfur atom into dethiobiotin via a radical-based mechanism. In Renibacterium salmoninarum (strain ATCC 33209 / DSM 20767 / JCM 11484 / NBRC 15589 / NCIMB 2235), this protein is Biotin synthase.